The chain runs to 414 residues: Serine/threonine-protein kinase 32B (414 aa).

A Protein kinase domain is found at 23-283; it reads FQILRAIGKG…LHDIQSVPYL (261 aa). Residues 29–37 and lysine 52 contribute to the ATP site; that span reads IGKGSFGKV. Aspartate 146 functions as the Proton acceptor in the catalytic mechanism. The tract at residues 374–396 is disordered; sequence QGQGSQLLDTDSRGGGQAQSKLQ.

The protein belongs to the protein kinase superfamily. Ser/Thr protein kinase family. Mg(2+) serves as cofactor.

It carries out the reaction L-seryl-[protein] + ATP = O-phospho-L-seryl-[protein] + ADP + H(+). The catalysed reaction is L-threonyl-[protein] + ATP = O-phospho-L-threonyl-[protein] + ADP + H(+). The chain is Serine/threonine-protein kinase 32B from Homo sapiens (Human).